The sequence spans 159 residues: NADH dehydrogenase [ubiquinone] 1 beta subcomplex subunit 10 (159 aa).

This sequence belongs to the complex I NDUFB10 subunit family. As to quaternary structure, complex I is composed of 45 different subunits.

Its subcellular location is the mitochondrion inner membrane. In terms of biological role, accessory subunit of the mitochondrial membrane respiratory chain NADH dehydrogenase (Complex I), that is believed not to be involved in catalysis. Complex I functions in the transfer of electrons from NADH to the respiratory chain. The immediate electron acceptor for the enzyme is believed to be ubiquinone. This Bombyx mori (Silk moth) protein is NADH dehydrogenase [ubiquinone] 1 beta subcomplex subunit 10.